A 512-amino-acid chain; its full sequence is Colistin resistance protein EmrB (512 aa).

14 consecutive transmembrane segments (helical) span residues 17–37, 55–75, 84–104, 115–135, 144–164, 169–189, 205–225, 234–254, 280–300, 314–334, 341–361, 376–396, 412–432, and 486–506; these read WAIFAAMIFGNFMAILDIQIV, VTWVQTVYLIAEIIAIPMSSI, VYYTMCAIGFTVSSLLCALSW, IQGFMGGGMIPTSMTALYLLF, LVMFGMISTLGPAIGPTIGGW, FSWHWMFLINIIPGIIIATVI, SMDWFSLVGMAMFLGGLEYFL, LADTGVRIAFMVCVVGGMIFF, ITTFVIGMALYGLGYMIPVFL, VMMVTGIVMFCFAPFLAWLIP, TVFVGMILAGFGVWLNSHLSI, GIGLMICLIVVSHLAMSTLPL, IGGAVGLALINSSLDWLTAMH, and FNDLLRMLAIIMFVTAFLTIF.

This sequence belongs to the major facilitator superfamily. EmrB family.

The protein localises to the cell inner membrane. Probably part of an efflux pump system that contributes to adaptation to osmotic stress and resistance to colistin. The chain is Colistin resistance protein EmrB from Acinetobacter baumannii (strain ATCC 17978 / DSM 105126 / CIP 53.77 / LMG 1025 / NCDC KC755 / 5377).